The primary structure comprises 328 residues: Lytic polysaccharide monooxygenase aasB (328 aa).

The signal sequence occupies residues 1–18 (MKAFFAISASTLLATVHG). Cu(2+) is bound at residue His-19. The cysteines at positions 40 and 43 are disulfide-linked. An N-linked (GlcNAc...) asparagine glycan is attached at Asn-54. Intrachain disulfides connect Cys-66–Cys-245, Cys-102–Cys-203, Cys-118–Cys-145, Cys-153–Cys-161, Cys-167–Cys-173, and Cys-181–Cys-192. His-109 contributes to the Cu(2+) binding site. Tyr-242 is a binding site for Cu(2+). The N-linked (GlcNAc...) asparagine glycan is linked to Asn-306.

The protein belongs to the polysaccharide monooxygenase AA13 family. The cofactor is Cu(2+).

The protein resides in the secreted. The catalysed reaction is starch + reduced acceptor + O2 = D-glucono-1,5-lactone-terminated malto-oligosaccharides + short-chain malto-oligosaccharides + acceptor + H2O.. Lytic polysaccharide monooxygenase involved in breakdown of granular resistant starch. In Emericella nidulans (strain FGSC A4 / ATCC 38163 / CBS 112.46 / NRRL 194 / M139) (Aspergillus nidulans), this protein is Lytic polysaccharide monooxygenase aasB.